Consider the following 447-residue polypeptide: Exodeoxyribonuclease 7 large subunit (447 aa).

It belongs to the XseA family. In terms of assembly, heterooligomer composed of large and small subunits.

It localises to the cytoplasm. It carries out the reaction Exonucleolytic cleavage in either 5'- to 3'- or 3'- to 5'-direction to yield nucleoside 5'-phosphates.. Bidirectionally degrades single-stranded DNA into large acid-insoluble oligonucleotides, which are then degraded further into small acid-soluble oligonucleotides. This Lactiplantibacillus plantarum (strain ATCC BAA-793 / NCIMB 8826 / WCFS1) (Lactobacillus plantarum) protein is Exodeoxyribonuclease 7 large subunit.